Reading from the N-terminus, the 753-residue chain is Putative cyclic nucleotide-gated ion channel 8 (753 aa).

Residues 1 to 111 (MYKSQYISGH…DKTLLLWNRM (111 aa)) are Cytoplasmic-facing. A helical membrane pass occupies residues 112–132 (FVISCILAVSVDPLFFYLPIV). Topologically, residues 133–145 (DNSKNCIGIDSKL) are extracellular. The chain crosses the membrane as a helical span at residues 146–166 (AVTTTTLRTIIDVFYLTRMAL). Topologically, residues 167–199 (QFRTAYIAPSSRVFGRGELVIDPAKIAERYLTR) are cytoplasmic. The chain crosses the membrane as a helical span at residues 200–220 (YFIVDFLAVLPLPQIAVWKFL). Residues 221 to 233 (HGSKGTDVLPTKQ) lie on the Extracellular side of the membrane. Residues 234 to 254 (ALLHIVITQYIPRFVRFIPLT) form a helical membrane-spanning segment. The Cytoplasmic portion of the chain corresponds to 255-274 (SELKKTAGAFAEGAWAGAAY). The chain crosses the membrane as a helical span at residues 275-295 (YLLWYMLASHITGAFWYMLSV). Residues 296–402 (ERNDTCLRSA…QGLQTSTYPG (107 aa)) are Extracellular-facing. The chain crosses the membrane as a helical span at residues 403–423 (EVLFSIAIAVAGLLLFALLIG). At 424–753 (NMQTYLQSLT…FEALDTDDLN (330 aa)) the chain is on the cytoplasmic side. A nucleoside 3',5'-cyclic phosphate is bound by residues 508 to 638 (LFAN…TFRF) and glutamate 579. The calmodulin-binding stretch occupies residues 624 to 639 (FRRLHSRQVQQTFRFY). One can recognise an IQ domain in the interval 644 to 673 (RTWAACFIQAAWRRHLRRKIAELRRKEEEE). The disordered stretch occupies residues 731–753 (KSLMNLTKPSEPDFEALDTDDLN). Residues 742–753 (PDFEALDTDDLN) show a composition bias toward acidic residues.

It belongs to the cyclic nucleotide-gated cation channel (TC 1.A.1.5) family. Homotetramer or heterotetramer.

The protein localises to the cell membrane. Functionally, putative cyclic nucleotide-gated ion channel. This chain is Putative cyclic nucleotide-gated ion channel 8 (CNGC8), found in Arabidopsis thaliana (Mouse-ear cress).